The primary structure comprises 509 residues: Histidine--tRNA ligase (509 aa).

The protein belongs to the class-II aminoacyl-tRNA synthetase family. In terms of assembly, homodimer.

The protein localises to the cytoplasm. The enzyme catalyses tRNA(His) + L-histidine + ATP = L-histidyl-tRNA(His) + AMP + diphosphate + H(+). The polypeptide is Histidine--tRNA ligase (Rhodopseudomonas palustris (strain TIE-1)).